The sequence spans 316 residues: tRNA dimethylallyltransferase (316 aa).

17-24 (GPTASGKT) serves as a coordination point for ATP. Substrate is bound at residue 19 to 24 (TASGKT). Interaction with substrate tRNA stretches follow at residues 42-45 (DSAL), 166-170 (QRLSR), and 247-252 (RCVGYR).

It belongs to the IPP transferase family. Monomer. The cofactor is Mg(2+).

It catalyses the reaction adenosine(37) in tRNA + dimethylallyl diphosphate = N(6)-dimethylallyladenosine(37) in tRNA + diphosphate. Functionally, catalyzes the transfer of a dimethylallyl group onto the adenine at position 37 in tRNAs that read codons beginning with uridine, leading to the formation of N6-(dimethylallyl)adenosine (i(6)A). This is tRNA dimethylallyltransferase from Salmonella arizonae (strain ATCC BAA-731 / CDC346-86 / RSK2980).